The sequence spans 285 residues: HTH-type transcriptional regulator MurR (285 aa).

In terms of domain architecture, HTH rpiR-type spans 1-77 (MLYLTKISNA…MALIGEYSAS (77 aa)). Positions 37–56 (SRQMAKQLGISQSSIVKFAQ) form a DNA-binding region, H-T-H motif. One can recognise an SIS domain in the interval 128 to 279 (IIEVISKAPF…SLKMIQRSSE (152 aa)).

As to quaternary structure, homotetramer.

The protein operates within amino-sugar metabolism; N-acetylmuramate degradation [regulation]. In terms of biological role, represses the expression of the murPQ operon involved in the uptake and degradation of N-acetylmuramic acid (MurNAc). Binds to two adjacent inverted repeats within the operator region. MurNAc 6-phosphate, the substrate of MurQ, is the specific inducer that weakens binding of MurR to the operator. The chain is HTH-type transcriptional regulator MurR from Shigella boydii serotype 18 (strain CDC 3083-94 / BS512).